Reading from the N-terminus, the 109-residue chain is Short-chain dehydrogenase/reductase homolog YusS (109 aa).

It belongs to the short-chain dehydrogenases/reductases (SDR) family.

This Bacillus subtilis (strain 168) protein is Short-chain dehydrogenase/reductase homolog YusS (yusS).